Here is a 381-residue protein sequence, read N- to C-terminus: Dual specificity protein phosphatase 6 (381 aa).

In terms of domain architecture, Rhodanese spans 30-148; that stretch reads GNERLLLMDC…FQAEFALHCE (119 aa). Positions 176–203 are disordered; it reads SSSDIESDLDRDPNSATDSDGSPLSNSQ. Residues 189–203 are compositionally biased toward polar residues; sequence NSATDSDGSPLSNSQ. One can recognise a Tyrosine-protein phosphatase domain in the interval 206–349; it reads FPVEILPFLY…LLDFERTLGL (144 aa). The Phosphocysteine intermediate role is filled by cysteine 293.

It belongs to the protein-tyrosine phosphatase family. Non-receptor class dual specificity subfamily. In terms of assembly, interacts with MAPK1/ERK2. Ubiquitinated by the SCF(FBXO31) complex, leading to its proteasomal degradation.

It localises to the cytoplasm. The catalysed reaction is O-phospho-L-tyrosyl-[protein] + H2O = L-tyrosyl-[protein] + phosphate. It catalyses the reaction O-phospho-L-seryl-[protein] + H2O = L-seryl-[protein] + phosphate. It carries out the reaction O-phospho-L-threonyl-[protein] + H2O = L-threonyl-[protein] + phosphate. Functionally, dual specificity protein phosphatase, which mediates dephosphorylation and inactivation of MAP kinases. Has a specificity for the ERK family. Plays an important role in alleviating acute postoperative pain. Necessary for the normal dephosphorylation of the long-lasting phosphorylated forms of spinal MAPK1/3 and MAP kinase p38 induced by peripheral surgery, which drives the resolution of acute postoperative allodynia. Also important for dephosphorylation of MAPK1/3 in local wound tissue, which further contributes to resolution of acute pain. This Mus musculus (Mouse) protein is Dual specificity protein phosphatase 6 (Dusp6).